A 606-amino-acid polypeptide reads, in one-letter code: NADH-ubiquinone oxidoreductase chain 5 (606 aa).

16 helical membrane-spanning segments follow: residues phenylalanine 4–isoleucine 24, asparagine 38–glycine 58, methionine 87–tyrosine 107, isoleucine 114–alanine 134, leucine 140–glycine 160, alanine 171–phenylalanine 191, leucine 213–leucine 233, threonine 241–isoleucine 261, valine 273–leucine 293, isoleucine 301–asparagine 320, alanine 325–isoleucine 347, methionine 366–leucine 386, leucine 409–phenylalanine 429, leucine 457–isoleucine 477, leucine 488–threonine 508, and leucine 583–methionine 603.

This sequence belongs to the complex I subunit 5 family. Core subunit of respiratory chain NADH dehydrogenase (Complex I) which is composed of 45 different subunits.

The protein resides in the mitochondrion inner membrane. The catalysed reaction is a ubiquinone + NADH + 5 H(+)(in) = a ubiquinol + NAD(+) + 4 H(+)(out). Core subunit of the mitochondrial membrane respiratory chain NADH dehydrogenase (Complex I) which catalyzes electron transfer from NADH through the respiratory chain, using ubiquinone as an electron acceptor. Essential for the catalytic activity and assembly of complex I. The chain is NADH-ubiquinone oxidoreductase chain 5 (MT-ND5) from Ceratotherium simum (White rhinoceros).